Here is a 291-residue protein sequence, read N- to C-terminus: Protein ZAR1-like (291 aa).

The tract at residues 103–152 (GSQTLHSSSLSDRTSSRKPTEAWEVGRRALIRRPQDGEDEESQEELTGPT) is disordered. Residues 106–115 (TLHSSSLSDR) are compositionally biased toward low complexity. Positions 116–129 (TSSRKPTEAWEVGR) are enriched in basic and acidic residues. The 3CxxC-type zinc finger occupies 195–280 (LKYGYFHCKD…QELCGHCKDK (86 aa)).

Belongs to the ZAR1 family. As to quaternary structure, interacts with YBX2. As to expression, expressed in oocytes and zygotes. Predominantly expressed in maturing oocytes before maternal-to-zygotic transition (MZT). Less abundant than Zar1.

Its subcellular location is the cytoplasm. It is found in the cytoplasmic ribonucleoprotein granule. MRNA-binding protein required for maternal mRNA storage, translation and degradation during oocyte maturation. Probably promotes formation of some phase-separated membraneless compartment that stores maternal mRNAs in oocytes: acts by undergoing liquid-liquid phase separation upon binding to maternal mRNAs. Binds to the 3'-UTR of maternal mRNAs, inhibiting their translation. The sequence is that of Protein ZAR1-like from Mus musculus (Mouse).